The chain runs to 192 residues: Apoptosis regulator BAX (192 aa).

Met-1 carries the N-acetylmethionine modification. The BH3 signature appears at 59 to 73 (LSECLKRIGDELDSN). Residues 98-118 (DMFSDGNFNWGRVVALFYFAS) carry the BH1 motif. Lys-128 is covalently cross-linked (Glycyl lysine isopeptide (Lys-Gly) (interchain with G-Cter in ubiquitin)). Positions 150–165 (GWIQDQGGWDGLLSYF) match the BH2 motif. A helical membrane pass occupies residues 172 to 192 (TVTIFVAGVLTASLTIWKKMG). Lys-190 is covalently cross-linked (Glycyl lysine isopeptide (Lys-Gly) (interchain with G-Cter in ubiquitin)).

Belongs to the Bcl-2 family. As to quaternary structure, homodimer. Forms higher oligomers under stress conditions. Forms heterooligomers with BAK. Interacts with BCL2L11. Interaction with BCL2L11 promotes BAX oligomerization and association with mitochondrial membranes, with subsequent release of cytochrome c. Forms heterodimers with BCL2, BCL2L1 isoform Bcl-X(L), BCL2L2, MCL1 and A1. Interacts with SH3GLB1. Interacts with humanin; forms fibers with humanin which results in BAX conformational changes and sequestering of BAX into the fibers, preventing BAX activation. Interacts with SFN and YWHAZ; the interaction occurs in the cytoplasm. Under stress conditions, JNK-mediated phosphorylation of SFN and YWHAZ, releases BAX to mitochondria. Interacts with RNF144B, which regulates the ubiquitin-dependent stability of BAX. Interacts with CLU under stress conditions that cause a conformation change leading to BAX oligomerization and association with mitochondria. Does not interact with CLU in unstressed cells. Interacts with FAIM2/LFG2. Interacts with RTL10/BOP. Interacts (via a C-terminal 33 residues) with NOL3 (via CARD domain); inhibits BAX activation and translocation and consequently cytochrome c release from mitochondria. Interacts with GIMAP3/IAN4 and GIMAP5/IAN5; this interaction is increased, when cells initiate apoptosis upon IL2 withdrawal. Interacts with IRF3; the interaction is direct, increases upon Sendai virus infection and mediates the formation of the apoptosis complex TOMM70:HSP90AA1:IRF3:BAX. Interacts with MOAP1, facilitating BAX-dependent mitochondrial outer membrane permeabilization and apoptosis. Interacts with BCL2L10/BCL-B. Interacts with non-acetylated XRCC6/Ku70; this interaction leads to BAX sequestration in the cytosol, away from the mitochondria, preventing BAX-mediated apoptosis. Interacts with BCL2A1 and BCL2L1 isoform Bcl-X(L). In terms of assembly, (Microbial infection) Interacts with adenovirus E1B 19K protein; this interaction blocks BAX oligomerization. As to quaternary structure, (Microbial infection) Interacts with human cytomegalovirus/HHV-5 protein vMIA/UL37. (Microbial infection) Interacts with enterovirus protein 2B; this interaction activates BAX-induced apoptosis. Ubiquitinated in the absence of XRCC6/Ku70. Ubiquitination promotes protein degradation. Ubiquitinated on Lys-128 and Lys-190. 'Lys-63'-linked polyubiquitin chains on Lys-128 are removed by USP12. In terms of tissue distribution, expressed in a wide variety of tissues. Isoform Psi is found in glial tumors. Isoform Alpha is expressed in spleen, breast, ovary, testis, colon and brain, and at low levels in skin and lung. Isoform Sigma is expressed in spleen, breast, ovary, testis, lung, colon, brain and at low levels in skin. Isoform Alpha and isoform Sigma are expressed in pro-myelocytic leukemia, histiocytic lymphoma, Burkitt's lymphoma, T-cell lymphoma, lymphoblastic leukemia, breast adenocarcinoma, ovary adenocarcinoma, prostate carcinoma, prostate adenocarcinoma, lung carcinoma, epidermoid carcinoma, small cell lung carcinoma and colon adenocarcinoma cell lines.

It is found in the mitochondrion outer membrane. The protein resides in the cytoplasm. It localises to the nucleus. In terms of biological role, plays a role in the mitochondrial apoptotic process. Under normal conditions, BAX is largely cytosolic via constant retrotranslocation from mitochondria to the cytosol mediated by BCL2L1/Bcl-xL, which avoids accumulation of toxic BAX levels at the mitochondrial outer membrane (MOM). Under stress conditions, undergoes a conformation change that causes translocation to the mitochondrion membrane, leading to the release of cytochrome c that then triggers apoptosis. Promotes activation of CASP3, and thereby apoptosis. The protein is Apoptosis regulator BAX (BAX) of Homo sapiens (Human).